We begin with the raw amino-acid sequence, 201 residues long: dCTP deaminase, dUMP-forming (201 aa).

Residues 101–106 (KSSLGR), Asp119, 127–129 (TLE), Gln148, Tyr162, and Gln174 each bind dCTP. Glu129 acts as the Proton donor/acceptor in catalysis.

The protein belongs to the dCTP deaminase family. As to quaternary structure, homotrimer.

The enzyme catalyses dCTP + 2 H2O = dUMP + NH4(+) + diphosphate. It participates in pyrimidine metabolism; dUMP biosynthesis; dUMP from dCTP: step 1/1. In terms of biological role, bifunctional enzyme that catalyzes both the deamination of dCTP to dUTP and the hydrolysis of dUTP to dUMP without releasing the toxic dUTP intermediate. The protein is dCTP deaminase, dUMP-forming of Clavibacter michiganensis subsp. michiganensis (strain NCPPB 382).